A 366-amino-acid chain; its full sequence is MASLSEFVSEPISMMSQTSAASESQCYYNETIAFFYNRSGKYLATEWNAVSKLVMGLGITVCIFIMLANLLVMVAIYVNRRFHFPIYYLMANLAAADFFAGLAYFYLMFNTGPNTRRLTVSTWLLRQGLIDTSLTASVANLLAIAIERHITVFRMQLHTRMSNRRVVVVIVVIWTVAIVMGAIPSVGWNCICDLEQCSNMAPLYSDSYLIFWTIFNLVTFVVMVVLYAHIFVYVRQKTMRMSRHSSGPRRNRDTMMSLLKTVVIVLGAFIVCWTPGLVLLLLDICCPQCNILAYEKFFLLLAEFNSAMNPIIYSYRDKEMSATFKQILCCQRTENVNGPTEGSDRSASSLNHTILAGVHSNDHSVV.

At 1 to 52 the chain is on the extracellular side; that stretch reads MASLSEFVSEPISMMSQTSAASESQCYYNETIAFFYNRSGKYLATEWNAVSK. Cystine bridges form between C26/C192 and C190/C197. N-linked (GlcNAc...) asparagine glycosylation is found at N29 and N37. An a 1-acyl-sn-glycero-3-phosphate-binding site is contributed by K41. The chain crosses the membrane as a helical span at residues 53–77; it reads LVMGLGITVCIFIMLANLLVMVAIY. Residues 78–85 are Cytoplasmic-facing; the sequence is VNRRFHFP. Residues 86–109 traverse the membrane as a helical segment; it reads IYYLMANLAAADFFAGLAYFYLMF. Residues 110-123 lie on the Extracellular side of the membrane; the sequence is NTGPNTRRLTVSTW. A helical membrane pass occupies residues 124-146; the sequence is LLRQGLIDTSLTASVANLLAIAI. Residue 126–131 coordinates a 1-acyl-sn-glycero-3-phosphate; it reads RQGLID. At 147-165 the chain is on the cytoplasmic side; it reads ERHITVFRMQLHTRMSNRR. The chain crosses the membrane as a helical span at residues 166–186; the sequence is VVVVIVVIWTVAIVMGAIPSV. The Extracellular segment spans residues 187 to 206; that stretch reads GWNCICDLEQCSNMAPLYSD. Residues 207-227 form a helical membrane-spanning segment; the sequence is SYLIFWTIFNLVTFVVMVVLY. W212 contributes to the a 1-acyl-sn-glycero-3-phosphate binding site. Topologically, residues 228-257 are cytoplasmic; sequence AHIFVYVRQKTMRMSRHSSGPRRNRDTMMS. A helical membrane pass occupies residues 258–282; it reads LLKTVVIVLGAFIVCWTPGLVLLLL. Topologically, residues 283–296 are extracellular; it reads DICCPQCNILAYEK. C286 and C289 are oxidised to a cystine. A helical membrane pass occupies residues 297–317; that stretch reads FFLLLAEFNSAMNPIIYSYRD. Residues 318-366 lie on the Cytoplasmic side of the membrane; it reads KEMSATFKQILCCQRTENVNGPTEGSDRSASSLNHTILAGVHSNDHSVV.

It belongs to the G-protein coupled receptor 1 family. In terms of tissue distribution, expressed at high levels in oocytes and at lower levels in brain and spinal cord. Below detection level in lung, heart, kidney, liver, muscle, stomach, and intestine.

Its subcellular location is the cell surface. The protein localises to the cell membrane. It localises to the endosome. In terms of biological role, receptor for lysophosphatidic acid (LPA). Plays a role in the reorganization of the actin cytoskeleton, cell migration, differentiation and proliferation, and thereby contributes to the responses to tissue damage and infectious agents. Activates downstream signaling cascades via the G(i)/G(o), G(12)/G(13), and G(q) families of heteromeric G proteins. Signaling inhibits adenylyl cyclase activity and decreases cellular cAMP levels. Signaling triggers an increase of cytoplasmic Ca(2+) levels. Signaling leads to the activation of phospholipase C (PLC) and the formation of inositol 1,4,5-trisphosphate. Signaling mediates activation of down-stream MAP kinases. Contributes to the regulation of cell shape. Promotes Rho-dependent reorganization of the actin cytoskeleton in neuronal cells and neurite retraction. Promotes the activation of Rho and the formation of actin stress fibers. Promotes formation of lamellipodia at the leading edge of migrating cells via activation of Rac. Through its function as lysophosphatidic acid receptor, plays a role in chemotaxis and cell migration, including responses to injury and wounding. Promotes cell proliferation in response to lysophosphatidic acid. This is Lysophosphatidic acid receptor 1-A (lpar1-a) from Xenopus laevis (African clawed frog).